A 440-amino-acid polypeptide reads, in one-letter code: Trigger factor (440 aa).

Residues 160 to 253 enclose the PPIase FKBP-type domain; that stretch reads KDTVIGDALR…VTEVKRLELP (94 aa).

Belongs to the FKBP-type PPIase family. Tig subfamily.

The protein localises to the cytoplasm. The catalysed reaction is [protein]-peptidylproline (omega=180) = [protein]-peptidylproline (omega=0). In terms of biological role, involved in protein export. Acts as a chaperone by maintaining the newly synthesized protein in an open conformation. Functions as a peptidyl-prolyl cis-trans isomerase. This Chlorobium chlorochromatii (strain CaD3) protein is Trigger factor.